The following is a 457-amino-acid chain: MMTRKVPIIAVATAPGKAGVGVVRISGQGLGELVETLFHRSLAPRQATLLTFCDADNQPIDQLLAIYFVGPASFTGEDVLELQCHGGPQLLELVMKRCLELGKALGLVIAEPGEFTLRAYLNNKVDLAQAEAIADLIDAQSEAAVRGAARSLQGSFSEDINGLIEEITQLRILVESTLDFPEEEIEFLENAQARERLAAVKKKLEALQAGAKQGKILRDGIQLVLAGAPNVGKSSLLNRLAGEEVAIVTPIAGTTRDRVKESIQIEGVPMHIIDTAGLRKTVDEVEAKGIERTWEAIRLADLVIFLGAPNAEPGHESLREEILGALPAKCPILDVINKSDLIEGGLAVSSSNEASPLLISAKTGAGIDALKQKILHVVGWNGAQEGAIVSRRRHLDCLERAAEHIAKSEQFAANGNNSLELFAEELFLAQNHLGQITGKLLPDDLLGKIFSQFCIGK.

(6S)-5-formyl-5,6,7,8-tetrahydrofolate contacts are provided by R24, E81, and K124. Residues 220–379 (GIQLVLAGAP…LKQKILHVVG (160 aa)) enclose the TrmE-type G domain. Position 230 (N230) interacts with K(+). GTP contacts are provided by residues 230–235 (NVGKSS), 249–255 (TPIAGTT), and 274–277 (DTAG). Residue S234 participates in Mg(2+) binding. T249, I251, and T254 together coordinate K(+). T255 provides a ligand contact to Mg(2+). (6S)-5-formyl-5,6,7,8-tetrahydrofolate is bound at residue K457.

Belongs to the TRAFAC class TrmE-Era-EngA-EngB-Septin-like GTPase superfamily. TrmE GTPase family. Homodimer. Heterotetramer of two MnmE and two MnmG subunits. K(+) is required as a cofactor.

Its subcellular location is the cytoplasm. Exhibits a very high intrinsic GTPase hydrolysis rate. Involved in the addition of a carboxymethylaminomethyl (cmnm) group at the wobble position (U34) of certain tRNAs, forming tRNA-cmnm(5)s(2)U34. The protein is tRNA modification GTPase MnmE of Polynucleobacter asymbioticus (strain DSM 18221 / CIP 109841 / QLW-P1DMWA-1) (Polynucleobacter necessarius subsp. asymbioticus).